Consider the following 342-residue polypeptide: MTTMLTTPLSGWSQLSLSYLTLTVGALALVVVLYISIDRFPAPRWLSKKYQLIGQKDPASTTSLECPYSYIRQIYGHHHWAPFVHKLSPTLQHDDPAKYKMVLEIMDAIHLCLMLVDDISDGSDFRKGRPAAHRIYGPSETANRAYFRVTQILNQTTTGFPHLAPWLMQDLENILEGQDLSLVWRRDGLKNFPTAPSERAAAYQRMASLKTGSLFRLLGHLVLEDRSMDDTMTLVAWYSQLQNDCKNVYSTEYAKMKGAIAEDLCNGELSYPIVLAMNAPDGHWVELALQSPSPRNVRNALRAIRSDNVHQMCMAELAESSSSIQDWLALWGRKEKLDLKST.

The helical transmembrane segment at 17–37 threads the bilayer; the sequence is LSYLTLTVGALALVVVLYISI. His110 is a binding site for isopentenyl diphosphate. Mg(2+) contacts are provided by Asp117 and Asp121. Residue Arg126 coordinates dimethylallyl diphosphate. The N-linked (GlcNAc...) asparagine glycan is linked to Asn154. Lys210 contacts dimethylallyl diphosphate.

It belongs to the FPP/GGPP synthase family.

It localises to the membrane. Its pathway is secondary metabolite biosynthesis. In terms of biological role, prenyl transferase; part of the gene cluster that mediates the biosynthesis of the indole diterpenes penitrems. The geranylgeranyl diphosphate (GGPP) synthase penG catalyzes the first step in penitrem biosynthesis via conversion of farnesyl pyrophosphate and isopentyl pyrophosphate into geranylgeranyl pyrophosphate (GGPP). Condensation of indole-3-glycerol phosphate with GGPP by the prenyl transferase penC then forms 3-geranylgeranylindole (3-GGI). Epoxidation by the FAD-dependent monooxygenase penM leads to a epoxidized-GGI that is substrate of the terpene cyclase penB for cyclization to yield paspaline. Paspaline is subsequently converted to 13-desoxypaxilline by the cytochrome P450 monooxygenase penP, the latter being then converted to paxilline by the cytochrome P450 monooxygenase penQ. Paxilline is converted to beta-paxitriol via C-10 ketoreduction by the short-chain dehydrogenase PC-15 which can be monoprenylated at the C-20 by the indole diterpene prenyltransferase penD. A two-step elimination (acetylation and elimination) process performed by the O-acetyltransferase PC-16 and the P.simplicissimum ptmI-ortholog not yet identified in P.crustosum, leads to the production of the prenylated form of penijanthine. The FAD-linked oxidoreductase ptmO then converts the prenylated form of penijanthine into PC-M5 which is in turn transformed into PC-M4 by the aromatic dimethylallyltransferase PC-22. A series of oxidation steps involving 4 cytochrome P450 monooxygenases (PC-21, PC-05, PC-23, PC-20) and a FAD-dependent monooxygenase (PC-14) are required for the transformation of PC-M4 to penitrems A and E. Synthesis of these final products is proposed to proceed via penitrems D and C (PC-21, PC-05, PC-14) and penitrems B and F (PC-21, PC-05, PC-14, PC-23). This chain is Prenyl transferase penC, found in Penicillium crustosum (Blue mold fungus).